The chain runs to 2066 residues: Kinesin-like protein KIN-12C (2066 aa).

Disordered regions lie at residues 1 to 41 (MSRN…SQIQ) and 59 to 116 (RAQH…RVSL). Over residues 20–33 (SLSLFSPSRPPLNS) the composition is skewed to low complexity. Residues 67 to 76 (GPEKKFEVLE) are compositionally biased toward basic and acidic residues. Over residues 99–109 (EPNSAQSTPTR) the composition is skewed to polar residues. Residues 168 to 505 (NVQVLIRLRP…LKFAQRAKLI (338 aa)) enclose the Kinesin motor domain. Position 249–256 (249–256 (GQTGSGKT)) interacts with ATP. 3 microtubules-binding regions span residues 375–379 (SSRSH), 406–412 (VDLAGSE), and 454–458 (HVPYR). Coiled coils occupy residues 1521–1618 (DLKT…VDEI) and 1650–1772 (KIYA…EILL). Disordered stretches follow at residues 1803-1823 (SAAE…RGSS) and 2043-2066 (KYRK…TRYR). A coiled-coil region spans residues 1905–2051 (VQRVVEKAQQ…AKYRKTSNNH (147 aa)). Polar residues predominate over residues 2047-2066 (TSNNHPSTRTQGQSSGTRYR).

It belongs to the TRAFAC class myosin-kinesin ATPase superfamily. Kinesin family. KIN-12 subfamily. In terms of assembly, interacts with TAN. Interacts with RANGAP1. In terms of tissue distribution, expressed in tissues enriched in dividing cells, such as root meristems, root primordia, and leaf primordia/young leaves.

The protein resides in the cytoplasm. It is found in the cytoskeleton. The protein localises to the phragmoplast. Functionally, involved in the spatial control of cytokinesis by a proper phragmoplast guidance. Localizes TAN to the cortical division sites (CDS) during cytokinesis via direct binding. The protein is Kinesin-like protein KIN-12C of Arabidopsis thaliana (Mouse-ear cress).